Here is a 377-residue protein sequence, read N- to C-terminus: tRNA-specific 2-thiouridylase MnmA (377 aa).

Residues 12–19 and methionine 38 contribute to the ATP site; that span reads GMSGGVDS. An interaction with target base in tRNA region spans residues 98–100; that stretch reads NPD. The Nucleophile role is filled by cysteine 103. A disulfide bond links cysteine 103 and cysteine 200. ATP is bound at residue glycine 127. Residues 150–152 are interaction with tRNA; it reads KDQ. Cysteine 200 functions as the Cysteine persulfide intermediate in the catalytic mechanism. The interaction with tRNA stretch occupies residues 314-315; sequence RY.

It belongs to the MnmA/TRMU family.

Its subcellular location is the cytoplasm. The catalysed reaction is S-sulfanyl-L-cysteinyl-[protein] + uridine(34) in tRNA + AH2 + ATP = 2-thiouridine(34) in tRNA + L-cysteinyl-[protein] + A + AMP + diphosphate + H(+). Catalyzes the 2-thiolation of uridine at the wobble position (U34) of tRNA, leading to the formation of s(2)U34. This is tRNA-specific 2-thiouridylase MnmA from Limosilactobacillus reuteri (strain DSM 20016) (Lactobacillus reuteri).